Here is a 597-residue protein sequence, read N- to C-terminus: MKHIRNFSIIAHIDHGKSTLSDRLIQVCGGLSDREMAEQVLDSMELERERGITIKAQSVTLDYKAQDGETYQLNFIDTPGHVDFSYEVSRSLAACEGALLVVDAGQGVEAQTLANCYTAIEMDLEVVPILNKIDLPAAEPERVAEEIEDIVGIDAIDAVRCSAKTGLGVDDVLEKIVSAIPAPEGDPEAPLQALIIDSWFDNYLGVVSLVRIKHGKLKKNDKIKVMSTGQVWGVDRLGIFTPKQIDTTELNTGEVGWVVCGIKDILGAPVGDTLTLAKNGAEKALPGFKKVKPQVYAGLFPVSSDDYEAFRDALGKLSLNDASLFYEPENSAALGFGFRCGFLGMLHMEIIQERLEREYDLDLITTAPTVVYEVLTTSKQTIYVDSPAKLPAVNDVAEIREPIARCNILVPADYLGNVITLCIEKRGTQVDMVYHGNQVALTYDIPMAEVVLDFFDRLKSTSRGYASLDYGFQRFEESNMVRVDVLLNGDKVDALAIITHKDQSQTRGRQLVEKMKEFIPRQMFDIAIQAAIGNHIIARSTVKQLRKNVLAKCYGGDVSRKKKLLKKQKEGKKRMKQIGNVELPQEAFLAILHVGKD.

The 183-residue stretch at 2–184 folds into the tr-type G domain; it reads KHIRNFSIIA…KIVSAIPAPE (183 aa). GTP-binding positions include 14–19 and 131–134; these read DHGKST and NKID.

It belongs to the TRAFAC class translation factor GTPase superfamily. Classic translation factor GTPase family. LepA subfamily.

It localises to the cell inner membrane. The catalysed reaction is GTP + H2O = GDP + phosphate + H(+). Required for accurate and efficient protein synthesis under certain stress conditions. May act as a fidelity factor of the translation reaction, by catalyzing a one-codon backward translocation of tRNAs on improperly translocated ribosomes. Back-translocation proceeds from a post-translocation (POST) complex to a pre-translocation (PRE) complex, thus giving elongation factor G a second chance to translocate the tRNAs correctly. Binds to ribosomes in a GTP-dependent manner. The chain is Elongation factor 4 from Vibrio vulnificus (strain CMCP6).